The following is a 161-amino-acid chain: uncharacterized protein (161 aa).

A helical transmembrane segment spans residues 16–36 (KLGLVVAIFFFMMGTTVVVLY).

It localises to the membrane. This is an uncharacterized protein from Encephalitozoon cuniculi (strain GB-M1) (Microsporidian parasite).